We begin with the raw amino-acid sequence, 119 residues long: Microtubule nucleation factor SSNA1 (119 aa).

Residue Thr-2 is modified to N-acetylthreonine. The interval Thr-2 to Gln-32 is important for localization to the centrosome. The stretch at Asn-13–Glu-70 forms a coiled coil.

It belongs to the SSNA1 family. In terms of assembly, self-associates to form fibrils. Also forms dimers as well as monomers. Interacts with SPAST.

Its subcellular location is the nucleus. The protein resides in the cytoplasm. It localises to the cytoskeleton. It is found in the microtubule organizing center. The protein localises to the centrosome. Its subcellular location is the centriole. The protein resides in the midbody. It localises to the flagellum basal body. It is found in the flagellum axoneme. The protein localises to the cell projection. Its subcellular location is the axon. Its function is as follows. Microtubule-binding protein which stabilizes dynamic microtubules by slowing growth and shrinkage at both plus and minus ends and serves as a sensor of microtubule damage, protecting microtubules from the microtubule-severing enzyme SPAST. Induces microtubule branching which is mediated by the formation of long SSNA1 fibrils which guide microtubule protofilaments to split apart from the mother microtubule and form daughter microtubules. Plays a role in axon outgrowth and branching. Required for cell division. The sequence is that of Microtubule nucleation factor SSNA1 from Mus musculus (Mouse).